A 248-amino-acid chain; its full sequence is Uracil-DNA glycosylase (248 aa).

The active-site Proton acceptor is Asp-85.

This sequence belongs to the uracil-DNA glycosylase (UDG) superfamily. UNG family.

The protein localises to the cytoplasm. The enzyme catalyses Hydrolyzes single-stranded DNA or mismatched double-stranded DNA and polynucleotides, releasing free uracil.. Excises uracil residues from the DNA which can arise as a result of misincorporation of dUMP residues by DNA polymerase or due to deamination of cytosine. This is Uracil-DNA glycosylase from Deinococcus deserti (strain DSM 17065 / CIP 109153 / LMG 22923 / VCD115).